The primary structure comprises 248 residues: Ribosomal RNA small subunit methyltransferase A (248 aa).

S-adenosyl-L-methionine contacts are provided by His11, Leu13, Gly38, Glu60, Asp83, and Asn101.

Belongs to the class I-like SAM-binding methyltransferase superfamily. rRNA adenine N(6)-methyltransferase family. RsmA subfamily.

It is found in the cytoplasm. It carries out the reaction adenosine(1518)/adenosine(1519) in 16S rRNA + 4 S-adenosyl-L-methionine = N(6)-dimethyladenosine(1518)/N(6)-dimethyladenosine(1519) in 16S rRNA + 4 S-adenosyl-L-homocysteine + 4 H(+). Functionally, specifically dimethylates two adjacent adenosines (A1518 and A1519) in the loop of a conserved hairpin near the 3'-end of 16S rRNA in the 30S particle. May play a critical role in biogenesis of 30S subunits. The sequence is that of Ribosomal RNA small subunit methyltransferase A from Aquifex aeolicus (strain VF5).